Here is a 24-residue protein sequence, read N- to C-terminus: Bombinin (24 aa).

Asn24 carries the asparagine amide modification.

The protein belongs to the bombinin family. As to expression, expressed by the skin glands.

The protein resides in the secreted. Has antimicrobial and hemolytic activities. The chain is Bombinin from Bombina variegata (Yellow-bellied toad).